A 217-amino-acid chain; its full sequence is EF-hand domain-containing protein D2 homolog (217 aa).

Positions 1 to 28 (MSVSSNASSASNKDSVDSPSSTTNTDSS) are enriched in low complexity. The interval 1 to 29 (MSVSSNASSASNKDSVDSPSSTTNTDSSE) is disordered. EF-hand domains are found at residues 69–104 (NQIK…LGAP) and 105–140 (QTHL…AQAG). Ca(2+) contacts are provided by Asp82, Asp86, Glu93, Asp118, Asp120, Asp122, Lys124, and Glu129. Positions 191 to 204 (EQEERRREEEERAQ) are enriched in basic and acidic residues. Residues 191–217 (EQEERRREEEERAQRRQQFQQRAAIFQ) are disordered. Positions 206-217 (RQQFQQRAAIFQ) are enriched in low complexity.

This Drosophila melanogaster (Fruit fly) protein is EF-hand domain-containing protein D2 homolog (Swip-1).